We begin with the raw amino-acid sequence, 632 residues long: 1-deoxy-D-xylulose-5-phosphate synthase (632 aa).

Residues His-78 and 119–121 (AHS) each bind thiamine diphosphate. Mg(2+) is bound at residue Asp-150. Residues 151 to 152 (GA), Asn-179, Tyr-286, and Glu-368 each bind thiamine diphosphate. Asn-179 contributes to the Mg(2+) binding site.

This sequence belongs to the transketolase family. DXPS subfamily. As to quaternary structure, homodimer. The cofactor is Mg(2+). Thiamine diphosphate serves as cofactor.

The enzyme catalyses D-glyceraldehyde 3-phosphate + pyruvate + H(+) = 1-deoxy-D-xylulose 5-phosphate + CO2. It functions in the pathway metabolic intermediate biosynthesis; 1-deoxy-D-xylulose 5-phosphate biosynthesis; 1-deoxy-D-xylulose 5-phosphate from D-glyceraldehyde 3-phosphate and pyruvate: step 1/1. Its function is as follows. Catalyzes the acyloin condensation reaction between C atoms 2 and 3 of pyruvate and glyceraldehyde 3-phosphate to yield 1-deoxy-D-xylulose-5-phosphate (DXP). The sequence is that of 1-deoxy-D-xylulose-5-phosphate synthase from Albidiferax ferrireducens (strain ATCC BAA-621 / DSM 15236 / T118) (Rhodoferax ferrireducens).